Reading from the N-terminus, the 164-residue chain is RSADAQQHGLWGKRQNPGLWGRSADAQQHGLWGKRQNPGLWGRSAEPGQPGLWGKRQNPGLWGRSAEPLQPGLWGKRQNPGLWGRSADAQQPGLWGKRQDLDIGMWGKRQKAGLWGRSADPGQLGLWGKRRSRIGLWGRSYEPPQFEDLEDLKKKSAIPKPSEQ.

Residues 1–6 (RSADAQ) constitute a propeptide that is removed on maturation. The tract at residues 1–92 (RSADAQQHGL…WGRSADAQQP (92 aa)) is disordered. Residues Trp11 and Trp20 each carry the tryptophan amide modification. Residues 23 to 27 (SADAQ) constitute a propeptide that is removed on maturation. Tryptophan amide is present on residues Trp32 and Trp41. Positions 44–49 (SAEPGQ) are excised as a propeptide. 2 positions are modified to tryptophan amide: Trp53 and Trp62. The propeptide occupies 65–70 (SAEPLQ). Tryptophan amide is present on residues Trp74 and Trp83. Residues 86-90 (SADAQ) constitute a propeptide that is removed on maturation. Residues Trp95, Trp106, and Trp115 each carry the tryptophan amide modification. Positions 118–123 (SADPGQ) are excised as a propeptide. Tryptophan amide is present on residues Trp127 and Trp137. The propeptide occupies 140-164 (SYEPPQFEDLEDLKKKSAIPKPSEQ).

This sequence belongs to the LWamide neuropeptide family.

The protein resides in the secreted. Metamorphosin A may be part of an internal signaling system involved in control of metamorphosis. This chain is LWamide neuropeptides, found in Actinia equina (Beadlet anemone).